The chain runs to 748 residues: CCR4-NOT transcription complex subunit 10-B (748 aa).

Positions 1-16 (MAADKAGEQGAEKHEG) are enriched in basic and acidic residues. 3 disordered regions span residues 1–25 (MAAD…GISD), 483–524 (KQEN…PPSS), and 605–634 (VSLG…KQIP). 2 stretches are compositionally biased toward polar residues: residues 487–509 (GSKA…VCSN) and 605–615 (VSLGVSSNEQE).

This sequence belongs to the CNOT10 family. Component of the CCR4-NOT complex. cnot10 and cnot11 form a subcomplex docked to the cnot1 scaffold.

Its subcellular location is the cytoplasm. It is found in the nucleus. Its function is as follows. Component of the CCR4-NOT complex which is one of the major cellular mRNA deadenylases and is linked to various cellular processes including bulk mRNA degradation, miRNA-mediated repression, translational repression during translational initiation and general transcription regulation. Additional complex functions may be a consequence of its influence on mRNA expression. Is not required for association of CNOT7 to the CCR4-NOT complex. The polypeptide is CCR4-NOT transcription complex subunit 10-B (cnot10-b) (Xenopus laevis (African clawed frog)).